Here is a 339-residue protein sequence, read N- to C-terminus: Tetraacyldisaccharide 4'-kinase (339 aa).

ATP is bound at residue 58–65 (NVGGVGKT).

It belongs to the LpxK family.

It carries out the reaction a lipid A disaccharide + ATP = a lipid IVA + ADP + H(+). It functions in the pathway glycolipid biosynthesis; lipid IV(A) biosynthesis; lipid IV(A) from (3R)-3-hydroxytetradecanoyl-[acyl-carrier-protein] and UDP-N-acetyl-alpha-D-glucosamine: step 6/6. In terms of biological role, transfers the gamma-phosphate of ATP to the 4'-position of a tetraacyldisaccharide 1-phosphate intermediate (termed DS-1-P) to form tetraacyldisaccharide 1,4'-bis-phosphate (lipid IVA). This Chromobacterium violaceum (strain ATCC 12472 / DSM 30191 / JCM 1249 / CCUG 213 / NBRC 12614 / NCIMB 9131 / NCTC 9757 / MK) protein is Tetraacyldisaccharide 4'-kinase.